An 842-amino-acid polypeptide reads, in one-letter code: Leucine--tRNA ligase (842 aa).

The short motif at P62–H72 is the 'HIGH' region element. The tract at residues G390 to D414 is disordered. Residues A607–S611 carry the 'KMSKS' region motif. K610 is an ATP binding site.

It belongs to the class-I aminoacyl-tRNA synthetase family.

The protein localises to the cytoplasm. The enzyme catalyses tRNA(Leu) + L-leucine + ATP = L-leucyl-tRNA(Leu) + AMP + diphosphate. In Paenarthrobacter aurescens (strain TC1), this protein is Leucine--tRNA ligase.